The primary structure comprises 196 residues: ATP-dependent Clp protease proteolytic subunit (196 aa).

S98 serves as the catalytic Nucleophile. Residue H123 is part of the active site.

Belongs to the peptidase S14 family. Fourteen ClpP subunits assemble into 2 heptameric rings which stack back to back to give a disk-like structure with a central cavity, resembling the structure of eukaryotic proteasomes.

It is found in the cytoplasm. It catalyses the reaction Hydrolysis of proteins to small peptides in the presence of ATP and magnesium. alpha-casein is the usual test substrate. In the absence of ATP, only oligopeptides shorter than five residues are hydrolyzed (such as succinyl-Leu-Tyr-|-NHMec, and Leu-Tyr-Leu-|-Tyr-Trp, in which cleavage of the -Tyr-|-Leu- and -Tyr-|-Trp bonds also occurs).. Cleaves peptides in various proteins in a process that requires ATP hydrolysis. Has a chymotrypsin-like activity. Plays a major role in the degradation of misfolded proteins. This is ATP-dependent Clp protease proteolytic subunit from Geobacillus thermodenitrificans (strain NG80-2).